The following is a 250-amino-acid chain: N-acyl homoserine lactonase (250 aa).

7 residues coordinate Zn(2+): H104, H106, D108, H109, H169, D191, and H235.

The protein belongs to the metallo-beta-lactamase superfamily. Monomer. Zn(2+) serves as cofactor.

The catalysed reaction is an N-acyl-L-homoserine lactone + H2O = an N-acyl-L-homoserine + H(+). Its function is as follows. Catalyzes hydrolysis of N-hexanoyl-(S)-homoserine lactone, but not the R-enantiomer. Hydrolyzes short- and long-chain N-acyl homoserine lactones with or without 3-oxo substitution at C3, has maximum activity on C10-AHL. The chain is N-acyl homoserine lactonase from Bacillus thuringiensis subsp. indiana.